Here is a 368-residue protein sequence, read N- to C-terminus: 3-dehydroquinate synthase (368 aa).

NAD(+) is bound by residues 69–74 (DGEAYK), 103–107 (GVIGD), 127–128 (TT), K140, and K149. Zn(2+)-binding residues include E182, H245, and H262.

It belongs to the sugar phosphate cyclases superfamily. Dehydroquinate synthase family. NAD(+) serves as cofactor. It depends on Co(2+) as a cofactor. The cofactor is Zn(2+).

It localises to the cytoplasm. It catalyses the reaction 7-phospho-2-dehydro-3-deoxy-D-arabino-heptonate = 3-dehydroquinate + phosphate. The protein operates within metabolic intermediate biosynthesis; chorismate biosynthesis; chorismate from D-erythrose 4-phosphate and phosphoenolpyruvate: step 2/7. Its function is as follows. Catalyzes the conversion of 3-deoxy-D-arabino-heptulosonate 7-phosphate (DAHP) to dehydroquinate (DHQ). The polypeptide is 3-dehydroquinate synthase (Pseudomonas aeruginosa (strain ATCC 15692 / DSM 22644 / CIP 104116 / JCM 14847 / LMG 12228 / 1C / PRS 101 / PAO1)).